The sequence spans 1891 residues: Protein TIC 214 (1891 aa).

The next 6 membrane-spanning stretches (helical) occupy residues 18-38 (IINS…FSIG), 64-84 (FITG…HLAL), 87-107 (PHTI…WNNH), 124-144 (LSIQ…HFIL), 172-192 (VGWL…LVWI), and 221-241 (IFSI…PSPI). 3 disordered regions span residues 248–300 (EASK…EGWD), 788–807 (EEQT…DNKR), and 1580–1607 (KNRS…NLSP). A compositionally biased stretch (acidic residues) spans 256-268 (VESEEERDVEIET). Residues 1582 to 1601 (RSQEAKEPPSQRERGSDIEN) show a composition bias toward basic and acidic residues.

This sequence belongs to the TIC214 family. In terms of assembly, part of the Tic complex.

The protein resides in the plastid. It is found in the chloroplast inner membrane. Its function is as follows. Involved in protein precursor import into chloroplasts. May be part of an intermediate translocation complex acting as a protein-conducting channel at the inner envelope. The polypeptide is Protein TIC 214 (Solanum lycopersicum (Tomato)).